The sequence spans 100 residues: Aspartyl/glutamyl-tRNA(Asn/Gln) amidotransferase subunit C (100 aa).

Belongs to the GatC family. Heterotrimer of A, B and C subunits.

It catalyses the reaction L-glutamyl-tRNA(Gln) + L-glutamine + ATP + H2O = L-glutaminyl-tRNA(Gln) + L-glutamate + ADP + phosphate + H(+). The enzyme catalyses L-aspartyl-tRNA(Asn) + L-glutamine + ATP + H2O = L-asparaginyl-tRNA(Asn) + L-glutamate + ADP + phosphate + 2 H(+). Functionally, allows the formation of correctly charged Asn-tRNA(Asn) or Gln-tRNA(Gln) through the transamidation of misacylated Asp-tRNA(Asn) or Glu-tRNA(Gln) in organisms which lack either or both of asparaginyl-tRNA or glutaminyl-tRNA synthetases. The reaction takes place in the presence of glutamine and ATP through an activated phospho-Asp-tRNA(Asn) or phospho-Glu-tRNA(Gln). The chain is Aspartyl/glutamyl-tRNA(Asn/Gln) amidotransferase subunit C from Rickettsia bellii (strain RML369-C).